Reading from the N-terminus, the 495-residue chain is UDP-N-acetylmuramoyl-L-alanyl-D-glutamate--2,6-diaminopimelate ligase (495 aa).

UDP-N-acetyl-alpha-D-muramoyl-L-alanyl-D-glutamate contacts are provided by residues Leu-27, Ser-29, and 44–46; that span reads HQA. An ATP-binding site is contributed by 116–122; it reads GTNGKTT. UDP-N-acetyl-alpha-D-muramoyl-L-alanyl-D-glutamate is bound by residues Asn-157, 158–159, Ser-185, Gln-191, and Arg-193; that span reads TT. The residue at position 225 (Lys-225) is an N6-carboxylysine. Meso-2,6-diaminopimelate is bound by residues Arg-390, 414–417, Gly-465, and Glu-469; that span reads DNPR. The Meso-diaminopimelate recognition motif signature appears at 414–417; it reads DNPR.

It belongs to the MurCDEF family. MurE subfamily. The cofactor is Mg(2+). In terms of processing, carboxylation is probably crucial for Mg(2+) binding and, consequently, for the gamma-phosphate positioning of ATP.

The protein resides in the cytoplasm. The catalysed reaction is UDP-N-acetyl-alpha-D-muramoyl-L-alanyl-D-glutamate + meso-2,6-diaminopimelate + ATP = UDP-N-acetyl-alpha-D-muramoyl-L-alanyl-gamma-D-glutamyl-meso-2,6-diaminopimelate + ADP + phosphate + H(+). It functions in the pathway cell wall biogenesis; peptidoglycan biosynthesis. Catalyzes the addition of meso-diaminopimelic acid to the nucleotide precursor UDP-N-acetylmuramoyl-L-alanyl-D-glutamate (UMAG) in the biosynthesis of bacterial cell-wall peptidoglycan. The protein is UDP-N-acetylmuramoyl-L-alanyl-D-glutamate--2,6-diaminopimelate ligase of Escherichia coli O157:H7.